Consider the following 219-residue polypeptide: Intraflagellar transport protein 22 (219 aa).

GTP-binding positions include 12–19 (GPSKSGKS) and 72–79 (WDVGGSSK).

It belongs to the small GTPase superfamily. Rab family.

The protein resides in the cytoplasm. It is found in the cytoskeleton. Its subcellular location is the flagellum basal body. It localises to the cell projection. The protein localises to the cilium. The protein resides in the flagellum. Required for flagellum formation. This chain is Intraflagellar transport protein 22 (IFT22), found in Trypanosoma brucei brucei (strain 927/4 GUTat10.1).